Reading from the N-terminus, the 584-residue chain is Proline--tRNA ligase (584 aa).

The disordered stretch occupies residues 242 to 261; that stretch reads APPASNPEERPATQVHDTPD.

The protein belongs to the class-II aminoacyl-tRNA synthetase family. ProS type 1 subfamily. In terms of assembly, homodimer.

It is found in the cytoplasm. The enzyme catalyses tRNA(Pro) + L-proline + ATP = L-prolyl-tRNA(Pro) + AMP + diphosphate. Functionally, catalyzes the attachment of proline to tRNA(Pro) in a two-step reaction: proline is first activated by ATP to form Pro-AMP and then transferred to the acceptor end of tRNA(Pro). As ProRS can inadvertently accommodate and process non-cognate amino acids such as alanine and cysteine, to avoid such errors it has two additional distinct editing activities against alanine. One activity is designated as 'pretransfer' editing and involves the tRNA(Pro)-independent hydrolysis of activated Ala-AMP. The other activity is designated 'posttransfer' editing and involves deacylation of mischarged Ala-tRNA(Pro). The misacylated Cys-tRNA(Pro) is not edited by ProRS. In Salinispora arenicola (strain CNS-205), this protein is Proline--tRNA ligase.